A 193-amino-acid chain; its full sequence is Probable GTP-binding protein EngB (193 aa).

Positions 22–193 constitute an EngB-type G domain; sequence SFPEIVFAGR…LAHFDQYICQ (172 aa). GTP contacts are provided by residues 30-37, 57-61, 75-78, 142-145, and 172-174; these read GRSNVGKS, GKTRL, DLPG, TKYD, and YSS. Mg(2+)-binding residues include Ser37 and Thr59.

It belongs to the TRAFAC class TrmE-Era-EngA-EngB-Septin-like GTPase superfamily. EngB GTPase family. It depends on Mg(2+) as a cofactor.

Functionally, necessary for normal cell division and for the maintenance of normal septation. The chain is Probable GTP-binding protein EngB from Pelodictyon phaeoclathratiforme (strain DSM 5477 / BU-1).